We begin with the raw amino-acid sequence, 182 residues long: MNDQLSRAMRLLSQRDHSESELRRKLAAPPFSAKGNWGKRSGAKSSNLVESNPVESNLAESNAIEESDPQVIEQVIDYCYQHNWLDDSRFAASYINSRSRKGYGVQRIRSELMQKGVDKERILAAFENSEIDWCQLAKEVAQRKFSETLPVEWKEKAKVQRYLLYRGFFQEEIQSIYTDSVE.

Residues 12 to 54 (LSQRDHSESELRRKLAAPPFSAKGNWGKRSGAKSSNLVESNPV) are disordered. Basic and acidic residues predominate over residues 13–24 (SQRDHSESELRR). The span at 43 to 54 (AKSSNLVESNPV) shows a compositional bias: polar residues.

Belongs to the RecX family.

Its subcellular location is the cytoplasm. In terms of biological role, modulates RecA activity. The chain is Regulatory protein RecX from Yersinia pseudotuberculosis serotype I (strain IP32953).